The chain runs to 373 residues: DNA replication and repair protein RecF (373 aa).

An ATP-binding site is contributed by 30 to 37; sequence GDNAQGKT.

The protein belongs to the RecF family.

The protein resides in the cytoplasm. In terms of biological role, the RecF protein is involved in DNA metabolism; it is required for DNA replication and normal SOS inducibility. RecF binds preferentially to single-stranded, linear DNA. It also seems to bind ATP. This Oenococcus oeni (strain ATCC BAA-331 / PSU-1) protein is DNA replication and repair protein RecF.